The chain runs to 389 residues: TelA-like protein SH1505 (389 aa).

Belongs to the TelA family.

The protein is TelA-like protein SH1505 of Staphylococcus haemolyticus (strain JCSC1435).